Reading from the N-terminus, the 180-residue chain is NADH-quinone oxidoreductase subunit I (180 aa).

2 consecutive 4Fe-4S ferredoxin-type domains span residues 48-80 (IVLT…LQKA) and 90-119 (EFFR…LTPD). Residues Cys-60, Cys-63, Cys-66, Cys-70, Cys-99, Cys-102, Cys-105, and Cys-109 each contribute to the [4Fe-4S] cluster site. Basic and acidic residues predominate over residues 161-174 (KPKGDAEHEAKPID). Positions 161–180 (KPKGDAEHEAKPIDVKSLLP) are disordered.

Belongs to the complex I 23 kDa subunit family. As to quaternary structure, NDH-1 is composed of 14 different subunits. Subunits NuoA, H, J, K, L, M, N constitute the membrane sector of the complex. [4Fe-4S] cluster serves as cofactor.

The protein localises to the cell inner membrane. It carries out the reaction a quinone + NADH + 5 H(+)(in) = a quinol + NAD(+) + 4 H(+)(out). Functionally, NDH-1 shuttles electrons from NADH, via FMN and iron-sulfur (Fe-S) centers, to quinones in the respiratory chain. The immediate electron acceptor for the enzyme in this species is believed to be ubiquinone. Couples the redox reaction to proton translocation (for every two electrons transferred, four hydrogen ions are translocated across the cytoplasmic membrane), and thus conserves the redox energy in a proton gradient. This chain is NADH-quinone oxidoreductase subunit I, found in Aeromonas salmonicida (strain A449).